A 151-amino-acid polypeptide reads, in one-letter code: Group 10 secretory phospholipase A2 (151 aa).

The signal sequence occupies residues 1-17 (MLLLLLLLLLGPGPGFS). Residues 18 to 28 (EATRRSHVYKR) constitute a propeptide that is removed on maturation. 8 cysteine pairs are disulfide-bonded: C39-C97, C53-C143, C55-C71, C70-C125, C76-C150, C77-C118, C86-C111, and C104-C116. Y54, G56, and G58 together coordinate Ca(2+). H74 is an active-site residue. D75 contributes to the Ca(2+) binding site. D119 is a catalytic residue.

Belongs to the phospholipase A2 family. As to quaternary structure, interacts with PLA2R1; this interaction mediates PLA2G10 clearance and inactivation. Requires Ca(2+) as cofactor. As to expression, expressed at high levels in testis and the gastrointestinal tract including stomach and colon. Expressed at lower levels in other tissues including small intestine, uterus, oviduct, lung, thymus, spleen and brain. Expressed in Paneth-like secretory epithelial cells of the colon. Expressed in gastric and ileac epithelial cells and in glandular epithelium of intestinal mucosa (at protein level). Expressed in late spermatogenic cells, spermatocytes and spermatids, but not spermatogonia in seminiferous tubules (at protein level). Expressed mainly in the apical side of endometrial epithelial cells and in the interstitium beneath the epithelium of uterus (at protein level). Expressed in resident spleen macrophages (at protein level). Expressed at outermost layer of hair follicles. Expressed in dorsal root ganglia in both NEFH-positive A-fibers and PRPH-positive C-fibers (at protein level).

The protein localises to the secreted. The protein resides in the lysosome. It localises to the cytoplasmic vesicle. Its subcellular location is the secretory vesicle. It is found in the acrosome. The catalysed reaction is a 1,2-diacyl-sn-glycero-3-phosphocholine + H2O = a 1-acyl-sn-glycero-3-phosphocholine + a fatty acid + H(+). It catalyses the reaction 1-hexadecanoyl-2-(9Z-octadecenoyl)-sn-glycero-3-phosphocholine + H2O = 1-hexadecanoyl-sn-glycero-3-phosphocholine + (9Z)-octadecenoate + H(+). The enzyme catalyses 1-octadecanoyl-2-(5Z,8Z,11Z,14Z-eicosatetraenoyl)-sn-glycero-3-phosphocholine + H2O = 1-octadecanoyl-sn-glycero-3-phosphocholine + (5Z,8Z,11Z,14Z)-eicosatetraenoate + H(+). It carries out the reaction 1,2-dihexadecanoyl-sn-glycero-3-phosphocholine + H2O = 1-hexadecanoyl-sn-glycero-3-phosphocholine + hexadecanoate + H(+). The catalysed reaction is 1-hexadecanoyl-2-(9Z-octadecenoyl)-sn-glycero-3-phosphoglycerol + H2O = 1-hexadecanoyl-sn-glycero-3-phosphoglycerol + (9Z)-octadecenoate + H(+). It catalyses the reaction 1,2-dihexadecanoyl-sn-glycero-3-phospho-(1'-sn-glycerol) + H2O = 1-hexadecanoyl-sn-glycero-3-phospho-(1'-sn-glycerol) + hexadecanoate + H(+). The enzyme catalyses 1-hexadecanoyl-2-(9Z-octadecenoyl)-sn-glycero-3-phospho-L-serine + H2O = 1-hexadecanoyl-sn-glycero-3-phospho-L-serine + (9Z)-octadecenoate + H(+). It carries out the reaction 1-hexadecanoyl-2-(9Z,12Z-octadecadienoyl)-sn-glycero-3-phosphoethanolamine + H2O = 1-hexadecanoyl-sn-glycero-3-phosphoethanolamine + (9Z,12Z)-octadecadienoate + H(+). The catalysed reaction is 1-hexadecanoyl-2-(9Z-octadecenoyl)-sn-glycero-3-phosphate + H2O = 1-hexadecanoyl-sn-glycero-3-phosphate + (9Z)-octadecenoate + H(+). It catalyses the reaction 1-O-hexadecyl-2-acetyl-sn-glycero-3-phosphocholine + H2O = 1-O-hexadecyl-sn-glycero-3-phosphocholine + acetate + H(+). Its function is as follows. Secretory calcium-dependent phospholipase A2 that primarily targets extracellular phospholipids. Hydrolyzes the ester bond of the fatty acyl group attached at sn-2 position of phospholipids with preference for phosphatidylcholines and phosphatidylglycerols over phosphatidylethanolamines. Preferentially releases sn-2 omega-6 and omega-3 polyunsaturated fatty acyl (PUFA) chains over saturated fatty acyls. Contributes to phospholipid remodeling of very low-density lipoprotein (VLDL), low-density lipoprotein (LDL) and high-density lipoprotein (HDL) particles. Hydrolyzes LDL phospholipids releasing unsaturated fatty acids that regulate macrophage differentiation toward foam cells. Efficiently hydrolyzes and inactivates PAF, a potent lipid mediator present in oxidized LDL. May act in an autocrine and paracrine manner. Secreted by lung epithelium, targets membrane phospholipids of infiltrating eosinophils, releasing arachidonate and boosting eicosanoid and cysteinyl leukotriene synthesis involved in airway inflammatory response. Secreted by gut epithelium, hydrolyzes dietary and biliary phosphatidylcholines in the gastrointestinal lumen, thereby regulating adipogenesis and body weight. Plays a stem cell regulator role in colon epithelium. Within intracellular compartment, mediates Paneth-like cell differentiation and its stem cell supporting functions by inhibiting Wnt signaling pathway in intestinal stem cell (ISC). Secreted in the intestinal lumen upon inflammation, acts in an autocrine way and promotes prostaglandin E2 synthesis that stimulates the Wnt signaling pathway in ISCs and tissue regeneration. May participate in hair follicle morphogenesis by regulating phosphatidylethanolamines metabolism at the outermost epithelial layer and facilitating melanin synthesis. By generating lysophosphatidylcholines (LPCs) at sperm acrosome controls sperm cell capacitation, acrosome reaction and overall fertility. May promote neurite outgrowth in neuron fibers involved in nociception. Contributes to lipid remodeling of cellular membranes and generation of lipid mediators involved in pathogen clearance. Cleaves sn-2 fatty acyl chains of phosphatidylglycerols and phosphatidylethanolamines, which are major components of membrane phospholipids in bacteria. Displays bactericidal activity against Gram-positive bacteria by directly hydrolyzing phospholipids of the bacterial membrane. In pulmonary epithelium, may contribute to host defense response against adenoviral infection. Prevents adenovirus entry into host cells by hydrolyzing host cell plasma membrane, releasing C16:0 LPCs that inhibit virus-mediated membrane fusion and viral infection. Likely prevents adenoviral entry into the endosomes of host cells. May play a role in maturation and activation of innate immune cells including macrophages, group 2 innate lymphoid cells and mast cells. The sequence is that of Group 10 secretory phospholipase A2 (Pla2g10) from Mus musculus (Mouse).